A 123-amino-acid polypeptide reads, in one-letter code: Small ribosomal subunit protein uS12 (123 aa).

D89 carries the 3-methylthioaspartic acid modification.

It belongs to the universal ribosomal protein uS12 family. As to quaternary structure, part of the 30S ribosomal subunit. Contacts proteins S8 and S17. May interact with IF1 in the 30S initiation complex.

Functionally, with S4 and S5 plays an important role in translational accuracy. Interacts with and stabilizes bases of the 16S rRNA that are involved in tRNA selection in the A site and with the mRNA backbone. Located at the interface of the 30S and 50S subunits, it traverses the body of the 30S subunit contacting proteins on the other side and probably holding the rRNA structure together. The combined cluster of proteins S8, S12 and S17 appears to hold together the shoulder and platform of the 30S subunit. This chain is Small ribosomal subunit protein uS12, found in Orientia tsutsugamushi (strain Ikeda) (Rickettsia tsutsugamushi).